The sequence spans 183 residues: Adenylate kinase (183 aa).

Residue 12-17 participates in ATP binding; that stretch reads GAGKGT. The NMP stretch occupies residues 32–61; it reads STGDLLRSEVAAGTALGQEAEAVMNRGELV. AMP-binding positions include threonine 33, arginine 38, 59–61, 86–89, and glutamine 93; these read ELV and GFPR. The segment at 127 to 133 is LID; that stretch reads ARGRDDD. Residue arginine 128 participates in ATP binding. AMP-binding residues include arginine 130 and arginine 141. Glycine 169 contacts ATP.

It belongs to the adenylate kinase family. As to quaternary structure, monomer.

The protein localises to the cytoplasm. The catalysed reaction is AMP + ATP = 2 ADP. It participates in purine metabolism; AMP biosynthesis via salvage pathway; AMP from ADP: step 1/1. In terms of biological role, catalyzes the reversible transfer of the terminal phosphate group between ATP and AMP. Plays an important role in cellular energy homeostasis and in adenine nucleotide metabolism. The sequence is that of Adenylate kinase from Parasynechococcus marenigrum (strain WH8102).